Consider the following 288-residue polypeptide: GCN5-related N-acetyltransferase 6, chloroplastic (288 aa).

The transit peptide at 1–111 (MSTISIHRTE…YWTAAWLRAE (111 aa)) directs the protein to the chloroplast. Positions 151–288 (SCIVAVKKEE…DDTYLLQYTS (138 aa)) constitute an N-acetyltransferase domain. Acetyl-CoA is bound by residues 215–217 (LCV), 223–228 (RQGIAC), 254–256 (NSV), and Tyr-261. The active-site Proton donor is the Tyr-261.

Belongs to the acetyltransferase family. GNAT subfamily. As to quaternary structure, oligomer. Autoacetylated. As to expression, expressed in green tissues and in roots.

The protein resides in the plastid. It localises to the chloroplast. The protein localises to the cytoplasm. It is found in the perinuclear region. The enzyme catalyses an N-terminal L-alpha-aminoacyl-[protein] + acetyl-CoA = N-terminal N(alpha)-acetyl-L-alpha-aminoacyl-[protein] + CoA + H(+). It catalyses the reaction L-lysyl-[protein] + acetyl-CoA = N(6)-acetyl-L-lysyl-[protein] + CoA + H(+). The catalysed reaction is N-terminal L-alanyl-[protein] + acetyl-CoA = N-terminal N(alpha)-acetyl-L-alanyl-[protein] + CoA + H(+). It carries out the reaction N-terminal L-seryl-[protein] + acetyl-CoA = N-terminal N(alpha)-acetyl-L-seryl-[protein] + CoA + H(+). The enzyme catalyses N-terminal L-threonyl-[protein] + acetyl-CoA = N-terminal N(alpha)-acetyl-L-threonyl-[protein] + CoA + H(+). It catalyses the reaction N-terminal L-methionyl-[protein] + acetyl-CoA = N-terminal N(alpha)-acetyl-L-methionyl-[protein] + CoA + H(+). The catalysed reaction is N-terminal L-valyl-[protein] + acetyl-CoA = N-terminal N(alpha)-acetyl-L-valyl-[protein] + CoA + H(+). Protein acetyltransferase with dual specificity triggering both N-alpha-acetylation (NTA), with a large spectrum of modified N-termini, including methionine, alanine, serine, threonine and to a lower extent valine as substrates, and epsilon-lysine acetylation (KA). This chain is GCN5-related N-acetyltransferase 6, chloroplastic, found in Arabidopsis thaliana (Mouse-ear cress).